The sequence spans 419 residues: Cytosine permease (419 aa).

Residues 1 to 19 lie on the Cytoplasmic side of the membrane; it reads MSQDNNFSQGPVPQSARKG. The helical transmembrane segment at 20 to 39 threads the bilayer; sequence VLALTFVMLGLTFFSASMWT. At 40–51 the chain is on the periplasmic side; the sequence is GGTLGTGLSYHD. The helical transmembrane segment at 52–71 threads the bilayer; it reads FFLAVLIGNLLLGIYTSFLG. The Cytoplasmic segment spans residues 72 to 100; it reads YIGAKTGLTTHLLARFSFGVKGSWLPSLL. The chain crosses the membrane as a helical span at residues 101 to 120; it reads LGGTQVGWFGVGVAMFAIPV. Residues 121–127 are Periplasmic-facing; sequence GKATGLD. Residues 128–147 traverse the membrane as a helical segment; that stretch reads INLLIAVSGLLMTVTVFFGI. Residues 148–152 lie on the Cytoplasmic side of the membrane; the sequence is SALTV. Residues 153-172 form a helical membrane-spanning segment; sequence LSVIAVPAIACLGGYSVWLA. At 173–192 the chain is on the periplasmic side; it reads VNGMGGLDALKAVVPAQPLD. The chain crosses the membrane as a helical span at residues 193–212; it reads FNVALALVVGSFISAGTLTA. The Cytoplasmic portion of the chain corresponds to 213-221; it reads DFVRFGRNA. The chain crosses the membrane as a helical span at residues 222–242; that stretch reads KLAVLVAMVAFFLGNSLMFIF. Over 243-257 the chain is Periplasmic; that stretch reads GAAGAAALGMADISD. The helical transmembrane segment at 258-277 threads the bilayer; sequence VMIAQGLLLPAIVVLGLNIW. Residues 278 to 300 are Cytoplasmic-facing; sequence TTNDNALYASGLGFANITGMSSK. A helical transmembrane segment spans residues 301 to 320; sequence TLSVINGIIGTVCALWLYNN. A topological domain (periplasmic) is located at residue F321. Residues 322–341 traverse the membrane as a helical segment; the sequence is VGWLTFLSAAIPPVGGVIIA. At 342-358 the chain is on the cytoplasmic side; it reads DYLMNRRRYEHFATTRM. Residues 359–378 form a helical membrane-spanning segment; sequence MSVNWVAILAVALGIAAGHW. Topologically, residues 379 to 380 are periplasmic; it reads LP. The chain crosses the membrane as a helical span at residues 381–400; the sequence is GIVPVNAVLGGALSYLILNP. Residues 401–419 lie on the Cytoplasmic side of the membrane; it reads ILNRKTTAAMTHVEANSVE.

This sequence belongs to the purine-cytosine permease (2.A.39) family.

It localises to the cell inner membrane. Its function is as follows. Required for cytosine transport into the cell. This chain is Cytosine permease (codB), found in Escherichia coli O6:H1 (strain CFT073 / ATCC 700928 / UPEC).